The chain runs to 380 residues: S-adenosylmethionine:tRNA ribosyltransferase-isomerase (380 aa).

Basic and acidic residues predominate over residues 1-15 (MHSKHPTDTARRCET). The interval 1–24 (MHSKHPTDTARRCETGTDSSDTAA) is disordered.

The protein belongs to the QueA family. As to quaternary structure, monomer.

The protein localises to the cytoplasm. It catalyses the reaction 7-aminomethyl-7-carbaguanosine(34) in tRNA + S-adenosyl-L-methionine = epoxyqueuosine(34) in tRNA + adenine + L-methionine + 2 H(+). It participates in tRNA modification; tRNA-queuosine biosynthesis. In terms of biological role, transfers and isomerizes the ribose moiety from AdoMet to the 7-aminomethyl group of 7-deazaguanine (preQ1-tRNA) to give epoxyqueuosine (oQ-tRNA). The sequence is that of S-adenosylmethionine:tRNA ribosyltransferase-isomerase from Oleidesulfovibrio alaskensis (strain ATCC BAA-1058 / DSM 17464 / G20) (Desulfovibrio alaskensis).